Here is a 445-residue protein sequence, read N- to C-terminus: Alpha-1,3-mannosyl-glycoprotein 2-beta-N-acetylglucosaminyltransferase (445 aa).

Residues Met1–Ser6 lie on the Cytoplasmic side of the membrane. The helical; Signal-anchor for type II membrane protein transmembrane segment at Ala7–Trp29 threads the bilayer. The Lumenal segment spans residues Thr30–Asn445. Cys113 and Cys143 are oxidised to a cystine. The substrate site is built by Arg115, Asp142, His188, and Asp210. Asp211 is a Mn(2+) binding site. A disulfide bridge links Cys237 with Cys303. Asp289 serves as the catalytic Proton acceptor. Position 320 (Ser320) interacts with substrate.

The protein belongs to the glycosyltransferase 13 family. Interacts with MGAT4D. Interacts with BRI3 (isoforms 1 and 2); the interaction with isoform 2 is weaker than with isoform 1. Mn(2+) is required as a cofactor.

It is found in the golgi apparatus membrane. The protein localises to the cytoplasm. Its subcellular location is the perinuclear region. The catalysed reaction is N(4)-(alpha-D-Man-(1-&gt;3)-[alpha-D-Man-(1-&gt;3)-[alpha-D-Man-(1-&gt;6)]-alpha-D-Man-(1-&gt;6)]-beta-D-Man-(1-&gt;4)-beta-D-GlcNAc-(1-&gt;4)-beta-D-GlcNAc)-L-asparaginyl-[protein] (N-glucan mannose isomer 5A1,2) + UDP-N-acetyl-alpha-D-glucosamine = N(4)-{beta-D-GlcNAc-(1-&gt;2)-alpha-D-Man-(1-&gt;3)-[alpha-D-Man-(1-&gt;3)-[alpha-D-Man-(1-&gt;6)]-alpha-D-Man-(1-&gt;6)]-beta-D-Man-(1-&gt;4)-beta-D-GlcNAc-(1-&gt;4)-beta-D-GlcNAc}-L-asparaginyl-[protein] + UDP + H(+). It participates in protein modification; protein glycosylation. In terms of biological role, initiates complex N-linked carbohydrate formation. Essential for the conversion of high-mannose to hybrid and complex N-glycans. In Homo sapiens (Human), this protein is Alpha-1,3-mannosyl-glycoprotein 2-beta-N-acetylglucosaminyltransferase (MGAT1).